Consider the following 205-residue polypeptide: uncharacterized protein (205 aa).

Positions 1 to 19 (MKTLCVLSIFLALLGGLCT) are cleaved as a signal peptide. Residues 40 to 133 (VSSVASTSTP…PKTSKNNPKT (94 aa)) show a composition bias toward low complexity. A disordered region spans residues 40–135 (VSSVASTSTP…TSKNNPKTQE (96 aa)). The helical transmembrane segment at 147 to 167 (GILYLFILLLIIFVIILICFI) threads the bilayer.

The protein resides in the host membrane. This is an uncharacterized protein from Equine herpesvirus 2 (strain 86/87) (EHV-2).